A 615-amino-acid polypeptide reads, in one-letter code: MFCRLGVHQFSPLSLILNTTKLARASTLSSACYPIQCTMVNSTNITNNTTIFDNHIHRRSANYEPPIWSFDYIQSLSSSQYKGETCTSRLNELEANVKEILLVEMKSNSLAQLEFIDALQGRLLSYRFETEINTILNEKYSINIFDNPNYNLYATALEFRLLRHHGYDVSQEIFNVFKDEITSKFKARTSGEDIIGVLALYEASFYGKKSESILEEARVSSIECLENYVAMETMTRNKPSLLVNDYDDDNNMLLLVNHALELPLYWRITRSEARWFIDLYEKNHNMNSTLLEFAKLDYNMVQSIYQEDLKHLSRWWSHTKLGEKMDFFRDRLMECFLWTVGIACEPEKSYYRRMSGRLYVLITTIDDIYDVYGTLEELELFTNAVERWDVKAMDDLPEYMRMPFFLLHNTINEMAFDVLGHQNFLNVKFLKRTWVDFCKHQLQEAKWFHSGYKPTFEEYINNAWISVSGPIILMDAYFSLTNPVTKDAINLLELGYPPIIYHASMILRLTDDLGTSNDEMKRGDIPKSIQCYMNDTGVSEDEARDHMKFLISELWKEINNEDENMDSPFSKQFLQNCKNLARISQFIYQYGDGHASQDSLSKQRISELPSIINHI.

Residues 1–33 constitute a chloroplast transit peptide; sequence MFCRLGVHQFSPLSLILNTTKLARASTLSSACY. Residues glutamate 334, valine 371, leucine 375, leucine 513, and serine 516 each coordinate (2E)-geranyl diphosphate. Mg(2+) contacts are provided by valine 371 and leucine 375. A DDXXD motif motif is present at residues 371 to 375; the sequence is VYGTL. The Mg(2+) site is built by serine 516, methionine 520, and aspartate 524.

This sequence belongs to the terpene synthase family. Tpsb subfamily. Requires Mg(2+) as cofactor. It depends on Mn(2+) as a cofactor.

It is found in the plastid. The protein localises to the chloroplast. It catalyses the reaction (2E)-geranyl diphosphate = alpha-terpinene + diphosphate. The catalysed reaction is (2E)-geranyl diphosphate = gamma-terpinene + diphosphate. It participates in secondary metabolite biosynthesis; terpenoid biosynthesis. In terms of biological role, involved in monoterpene (C10) olefins biosynthesis, constituants of cannabinoids and terpenoids-rich resins. Catalyzes mainly the conversion of (2E)-geranyl diphosphate to alpha-terpinene and gamma-terpinene. This is Alpha-terpinene synthase TPS33PK, chloroplastic from Cannabis sativa (Hemp).